The following is a 62-amino-acid chain: Large ribosomal subunit protein bL33 (62 aa).

This sequence belongs to the bacterial ribosomal protein bL33 family.

This Bacteroides fragilis (strain ATCC 25285 / DSM 2151 / CCUG 4856 / JCM 11019 / LMG 10263 / NCTC 9343 / Onslow / VPI 2553 / EN-2) protein is Large ribosomal subunit protein bL33.